Consider the following 111-residue polypeptide: Small ribosomal subunit protein uS17 (111 aa).

It belongs to the universal ribosomal protein uS17 family. In terms of assembly, part of the 30S ribosomal subunit.

Its function is as follows. One of the primary rRNA binding proteins, it binds specifically to the 5'-end of 16S ribosomal RNA. This Methanocella arvoryzae (strain DSM 22066 / NBRC 105507 / MRE50) protein is Small ribosomal subunit protein uS17.